Consider the following 86-residue polypeptide: Thioredoxin (86 aa).

Active-site nucleophile residues include cysteine 15 and cysteine 18. Cysteines 15 and 18 form a disulfide.

The protein belongs to the glutaredoxin family.

Its function is as follows. Does not function as a glutathione-disulfide oxidoreductase in the presence of glutathione and glutathione reductase. Has low thioredoxin activity in vitro. This chain is Thioredoxin, found in Methanocaldococcus jannaschii (strain ATCC 43067 / DSM 2661 / JAL-1 / JCM 10045 / NBRC 100440) (Methanococcus jannaschii).